The chain runs to 102 residues: Small ribosomal subunit protein uS10 (102 aa).

The protein belongs to the universal ribosomal protein uS10 family. As to quaternary structure, part of the 30S ribosomal subunit.

In terms of biological role, involved in the binding of tRNA to the ribosomes. The protein is Small ribosomal subunit protein uS10 of Clostridium beijerinckii (strain ATCC 51743 / NCIMB 8052) (Clostridium acetobutylicum).